We begin with the raw amino-acid sequence, 440 residues long: Oligodendrocyte-myelin glycoprotein (440 aa).

Residues 1–24 form the signal peptide; sequence MEYQILKMSSCLFILLFLTPGILC. An LRRNT domain is found at 25–55; the sequence is ICPLQCTCTERHRHVDCSGRNLTTLPPGLQE. N-linked (GlcNAc...) asparagine glycans are attached at residues Asn-45 and Asn-61. LRR repeat units follow at residues 56–78, 79–100, 101–121, 124–145, 147–168, 169–189, 192–213, and 216–239; these read NIIHLNLSYNHFTDLHNQLTPYT, NLRTLDISNNRLESLPAQLPRS, LWNMSAANNNIKLLDKSDTAY, NLKYLDVSKNMLEKVVLIKNTL, SLEVLNLSSNKLWTVPTNMPSK, LHIVDLSNNSLTQILPGTLIN, NLTHLYLHNNKFTFIPEQSFDQ, and QLQEITLHNNRWSCDHKQNITYLL. An N-linked (GlcNAc...) asparagine glycan is attached at Asn-103. Asn-152, Asn-176, Asn-189, Asn-192, and Asn-234 each carry an N-linked (GlcNAc...) asparagine glycan. 5 Ser/Thr-rich repeats span residues 229-270, 271-292, 293-335, 336-377, and 378-416; these read CDHK…YPTP, PGFTSSLFTMSEMQTVDTINSL, SMVT…VAYP, EDTP…PPSP, and VTLSIARGMPNNFSEMPRQSTTLNLRREETTANGNTRPP. 2 N-linked (GlcNAc...) asparagine glycosylation sites follow: Asn-364 and Asn-389. Ser-417 carries the GPI-anchor amidated serine lipid modification. Positions 418–440 are cleaved as a propeptide — removed in mature form; sequence AASAWKVNASLLLMLNAVVMLAG. The N-linked (GlcNAc...) asparagine glycan is linked to Asn-425.

Binds to RTN4R. O-glycosylated in its Ser/Thr-rich repeat domain. In terms of tissue distribution, oligodendrocytes and myelin of the central nervous system.

It localises to the cell membrane. Functionally, cell adhesion molecule contributing to the interactive process required for myelination in the central nervous system. The polypeptide is Oligodendrocyte-myelin glycoprotein (Omg) (Mus musculus (Mouse)).